Here is a 468-residue protein sequence, read N- to C-terminus: 3-isopropylmalate dehydratase large subunit (468 aa).

The tract at residues 53 to 74 (QPSKTVATMDHNVPTDSRDLAG) is disordered. The [4Fe-4S] cluster site is built by Cys347, Cys407, and Cys410.

It belongs to the aconitase/IPM isomerase family. LeuC type 1 subfamily. Heterodimer of LeuC and LeuD. The cofactor is [4Fe-4S] cluster.

It catalyses the reaction (2R,3S)-3-isopropylmalate = (2S)-2-isopropylmalate. It participates in amino-acid biosynthesis; L-leucine biosynthesis; L-leucine from 3-methyl-2-oxobutanoate: step 2/4. Its function is as follows. Catalyzes the isomerization between 2-isopropylmalate and 3-isopropylmalate, via the formation of 2-isopropylmaleate. The polypeptide is 3-isopropylmalate dehydratase large subunit (Pasteurella multocida (strain Pm70)).